Consider the following 299-residue polypeptide: Recombination-associated protein RdgC (299 aa).

Belongs to the RdgC family.

Its subcellular location is the cytoplasm. It is found in the nucleoid. May be involved in recombination. This Cupriavidus necator (strain ATCC 17699 / DSM 428 / KCTC 22496 / NCIMB 10442 / H16 / Stanier 337) (Ralstonia eutropha) protein is Recombination-associated protein RdgC.